A 480-amino-acid polypeptide reads, in one-letter code: Flotillin-like protein 2 (480 aa).

Cysteine 37 carries the S-palmitoyl cysteine lipid modification. Positions 237–257 (ENQREAEVAQANSELAKKKAA) form a coiled coil.

The protein belongs to the band 7/mec-2 family. Flotillin subfamily. Post-translationally, may be palmitoylated. As to expression, expressed in flowers in green pods. Primarily expressed in vascular tissues. Upon induction of nodulation, expansion of expression in the root cortex in the region of elongating root hairs, which will eventually become colonized by bacteria. Expressed in the infection zone in nodules.

It localises to the cell membrane. Its subcellular location is the membrane. The protein localises to the caveola. Functionally, may act as a scaffolding protein within caveolar membranes, functionally participating in formation of caveolae or caveolae-like vesicles. Required for early symbiotic events and nodules formation. This chain is Flotillin-like protein 2 (FLOT2), found in Medicago truncatula (Barrel medic).